Reading from the N-terminus, the 906-residue chain is Protein translocase subunit SecA (906 aa).

ATP is bound by residues Gln-86, 104 to 108 (GEGKT), and Asp-499. Residues 863–887 (PVVSRIDPKDRNPDDPTSWGRVSRN) are disordered. Residues Cys-890, Cys-892, Cys-901, and His-902 each contribute to the Zn(2+) site.

It belongs to the SecA family. As to quaternary structure, monomer and homodimer. Part of the essential Sec protein translocation apparatus which comprises SecA, SecYEG and auxiliary proteins SecDF-YajC and YidC. It depends on Zn(2+) as a cofactor.

Its subcellular location is the cell inner membrane. The protein resides in the cytoplasm. The enzyme catalyses ATP + H2O + cellular proteinSide 1 = ADP + phosphate + cellular proteinSide 2.. In terms of biological role, part of the Sec protein translocase complex. Interacts with the SecYEG preprotein conducting channel. Has a central role in coupling the hydrolysis of ATP to the transfer of proteins into and across the cell membrane, serving both as a receptor for the preprotein-SecB complex and as an ATP-driven molecular motor driving the stepwise translocation of polypeptide chains across the membrane. This chain is Protein translocase subunit SecA, found in Rickettsia rickettsii (strain Iowa).